Consider the following 273-residue polypeptide: MSSPRHVFYISDRTGLTAENIGEALLNQFGNLSFKRHTHPFVDTPEKARAVVEKVNRSRQENGQRPIAFVSVVDDEIRRIIKGADAFQINFFETFLGLLEKELNTEATASEQGHHSIGNTKRYDARMEAVNFSLNHDDGVSDKNLQEADVILMGVSRSGKTPTCLYLALQYGIRAANYPLIPDDLESADLPRMVKPYRDKLFGLTIQPERLQAIRQERRPNSTYAKIDTCRSEVADAQSMFRRHGIPFANTTDKSVEELAVHILQACKLKRRF.

An ADP-binding site is contributed by 154–161 (GVSRSGKT).

Belongs to the pyruvate, phosphate/water dikinase regulatory protein family. PSRP subfamily.

The enzyme catalyses [pyruvate, water dikinase] + ADP = [pyruvate, water dikinase]-phosphate + AMP + H(+). It carries out the reaction [pyruvate, water dikinase]-phosphate + phosphate + H(+) = [pyruvate, water dikinase] + diphosphate. In terms of biological role, bifunctional serine/threonine kinase and phosphorylase involved in the regulation of the phosphoenolpyruvate synthase (PEPS) by catalyzing its phosphorylation/dephosphorylation. This is Putative phosphoenolpyruvate synthase regulatory protein from Neisseria meningitidis serogroup C (strain 053442).